Reading from the N-terminus, the 783-residue chain is MPGVIPSESNGLSRGSPSKKNRLSLKFFQKKETKRALDFTDSQENEEKTSEYKGSEIDQVVPAAQSSPINCEKRENLLPFVGLNNLGNTCYLNSILQVLYFCPGFKSGVKHLFNIISRKKEALKDEANQKDKGNCKEDSLASYELICSLQSLIISVEQLQASFLLNPEKYTDELATQPRRLLNTLRELNPMYEGYLQHDAQEVLQCILGNIQETCQLLKKEEVKNVEDLSTKVEEYQKEEMSDNNSMEMDNMRHSEDYKEKLSKGNGKRKSDAEFGNMKKKVKISKEHQSSEENQRQTRSKRKAAGDTLEISHKIIPKHISENESTRPSQRKSKVKINWLKSAAKQPSILSKFCSMGKIATNQGSKGHCKENEYDLEEDLGKYENDNTTNDCELESPGNNDMPVHVNEVKPINKGAEQIGFELVEKLFQGQLVLRTRCLECESLTERREDFQDISVPVQEDELSKVEENSEISPEPKTEMKTLRWAISQFASVERIVGEDKYFCENCHHYTEAERSLLFDKMPEVITIHLKCFAASGLEFDCYGGGLSKINTPLLTPLKLSLEEWSTKPTNDSYGLFAVVMHSGITISSGHYTASVKVTDLNSLELDKENFVIDQTCEIGKPEPLNEEEVRGVVENYDNEEVSIRVSGNNQPSKVLNKKNVEAIGLLGGQKSKADYELYNKASNPDKVASTALPENRNSETNNTNGTDESDSNKESSDQTGINISGFENKISYVVQSLKEYEGKWLLFDDSEVKVTEEKDFLNSLSPSTSPTSTPYLLFYKKL.

2 disordered regions span residues 1-22 (MPGV…KKNR) and 34-55 (KRAL…YKGS). The segment covering 7–16 (SESNGLSRGS) has biased composition (polar residues). Phosphoserine is present on residues S16 and S42. Residues 45–55 (NEEKTSEYKGS) show a composition bias toward basic and acidic residues. At S67 the chain carries Phosphoserine. A USP domain is found at 81–783 (VGLNNLGNTC…TPYLLFYKKL (703 aa)). Residue C90 is the Nucleophile of the active site. A disordered region spans residues 234–311 (EEYQKEEMSD…RKAAGDTLEI (78 aa)). Composition is skewed to basic and acidic residues over residues 250-273 (DNMR…KSDA) and 284-296 (ISKE…ENQR). S473 is subject to Phosphoserine. Residue H591 is the Proton acceptor of the active site. The disordered stretch occupies residues 685-722 (PDKVASTALPENRNSETNNTNGTDESDSNKESSDQTGI). A Phosphoserine modification is found at S766.

It belongs to the peptidase C19 family. As to quaternary structure, interacts with FANCD2 and PCNA. Interacts with WDR48. Interacts with ATAD5; the interaction regulates USP1-mediated PCNA deubiquitination. In terms of processing, autocatalytic cleavage of USP1 following UV irradiation inactivates it, leading to an increase in ubiquitinated PCNA, recruitment of POLH and translesion synthesis. Post-translationally, ubiquitinated by the CRL2(KLHDC2) complex following autocatalytic cleavage, leading to its degradation: the CRL2(KLHDC2) complex recognizes the diglycine (Gly-Gly) at the C-terminus.

The protein localises to the nucleus. It carries out the reaction Thiol-dependent hydrolysis of ester, thioester, amide, peptide and isopeptide bonds formed by the C-terminal Gly of ubiquitin (a 76-residue protein attached to proteins as an intracellular targeting signal).. In terms of biological role, negative regulator of DNA damage repair which specifically deubiquitinates monoubiquitinated FANCD2. Also involved in PCNA-mediated translesion synthesis (TLS) by deubiquitinating monoubiquitinated PCNA. Has almost no deubiquitinating activity by itself and requires the interaction with WDR48 to have a high activity. The polypeptide is Ubiquitin carboxyl-terminal hydrolase 1 (Bos taurus (Bovine)).